The following is a 243-amino-acid chain: Proteasome subunit beta 1 (243 aa).

Residues 1 to 14 (MRAPQHNSDFSRTV) show a composition bias toward polar residues. Residues 1–34 (MRAPQHNSDFSRTVDQLADDPNPYEPEIGSMPQN) form a disordered region. Residues 1–48 (MRAPQHNSDFSRTVDQLADDPNPYEPEIGSMPQNDLTRADLDNVNKTG) constitute a propeptide, removed in mature form; by autocatalysis. Catalysis depends on T49, which acts as the Nucleophile.

This sequence belongs to the peptidase T1B family. The 20S proteasome core is composed of 14 alpha and 14 beta subunits that assemble into four stacked heptameric rings, resulting in a barrel-shaped structure. The two inner rings, each composed of seven catalytic beta subunits, are sandwiched by two outer rings, each composed of seven alpha subunits. The catalytic chamber with the active sites is on the inside of the barrel. Has a gated structure, the ends of the cylinder being occluded by the N-termini of the alpha-subunits. Is capped at one or both ends by the proteasome regulatory ATPase, PAN.

It is found in the cytoplasm. The catalysed reaction is Cleavage of peptide bonds with very broad specificity.. The formation of the proteasomal ATPase PAN-20S proteasome complex, via the docking of the C-termini of PAN into the intersubunit pockets in the alpha-rings, triggers opening of the gate for substrate entry. Interconversion between the open-gate and close-gate conformations leads to a dynamic regulation of the 20S proteasome proteolysis activity. In terms of biological role, component of the proteasome core, a large protease complex with broad specificity involved in protein degradation. The sequence is that of Proteasome subunit beta 1 from Haloterrigena turkmenica (strain ATCC 51198 / DSM 5511 / JCM 9101 / NCIMB 13204 / VKM B-1734 / 4k) (Halococcus turkmenicus).